The primary structure comprises 219 residues: Thiopurine S-methyltransferase (219 aa).

S-adenosyl-L-methionine-binding residues include W10, L45, E66, and R123.

Belongs to the class I-like SAM-binding methyltransferase superfamily. TPMT family.

The protein resides in the cytoplasm. The enzyme catalyses S-adenosyl-L-methionine + a thiopurine = S-adenosyl-L-homocysteine + a thiopurine S-methylether.. The protein is Thiopurine S-methyltransferase of Shewanella pealeana (strain ATCC 700345 / ANG-SQ1).